Consider the following 493-residue polypeptide: Glutamyl-tRNA(Gln) amidotransferase subunit A (493 aa).

Residues lysine 79 and serine 159 each act as charge relay system in the active site. The active-site Acyl-ester intermediate is serine 183.

It belongs to the amidase family. GatA subfamily. As to quaternary structure, heterotrimer of A, B and C subunits.

The catalysed reaction is L-glutamyl-tRNA(Gln) + L-glutamine + ATP + H2O = L-glutaminyl-tRNA(Gln) + L-glutamate + ADP + phosphate + H(+). Its function is as follows. Allows the formation of correctly charged Gln-tRNA(Gln) through the transamidation of misacylated Glu-tRNA(Gln) in organisms which lack glutaminyl-tRNA synthetase. The reaction takes place in the presence of glutamine and ATP through an activated gamma-phospho-Glu-tRNA(Gln). The protein is Glutamyl-tRNA(Gln) amidotransferase subunit A of Rhizobium etli (strain ATCC 51251 / DSM 11541 / JCM 21823 / NBRC 15573 / CFN 42).